We begin with the raw amino-acid sequence, 501 residues long: Glutamate--tRNA ligase (501 aa).

The 'HIGH' region signature appears at 21–31 (PSPTGTPHVGL). Residues 266–270 (KLSKR) carry the 'KMSKS' region motif. K269 provides a ligand contact to ATP.

Belongs to the class-I aminoacyl-tRNA synthetase family. Glutamate--tRNA ligase type 1 subfamily. As to quaternary structure, monomer.

It localises to the cytoplasm. The catalysed reaction is tRNA(Glu) + L-glutamate + ATP = L-glutamyl-tRNA(Glu) + AMP + diphosphate. Catalyzes the attachment of glutamate to tRNA(Glu) in a two-step reaction: glutamate is first activated by ATP to form Glu-AMP and then transferred to the acceptor end of tRNA(Glu). In Kineococcus radiotolerans (strain ATCC BAA-149 / DSM 14245 / SRS30216), this protein is Glutamate--tRNA ligase.